Consider the following 420-residue polypeptide: MNLLVVGSGGREHAISKKLLESNNVENVYCAPGNDGMRLDNIQLVAISETDKAGLIDFAKKAEIAFVIVGPEVPLLEGVVDALEEAGIKAFGPKANAALIEGSKDFAKQFMEKYAIPTAASKTFTDYAEAKAYLDERGVPIVIKADGLAAGKGVTVALEMEEAVLALKDMMLEEKFGDASLKVVIEDFLAGEEFSLMAFVNGEEVYPMAIAQDHKRAYEGDKGPNTGGMGAYSPVPHISETVVDEAVEKILLPAAKGMVKEGRYFRGILYAGLILTAEGPKVIEFNARFGDPETQVVLPRLESDFAALIDALLHNEKPDVRFKKSGITLGVVLASAGYPEHYEKGNKLTGLNDVAEDVAIYHAGTKQDENDDFISDGGRVLLLAKEAETMTDARTLLYPEMQKLDNPNFFYRIDIGTKAE.

Positions 108-314 constitute an ATP-grasp domain; it reads KQFMEKYAIP…FAALIDALLH (207 aa). Residue 134 to 195 participates in ATP binding; it reads LDERGVPIVI…EDFLAGEEFS (62 aa). Mg(2+)-binding residues include glutamate 284 and asparagine 286.

The protein belongs to the GARS family. Mg(2+) serves as cofactor. It depends on Mn(2+) as a cofactor.

It catalyses the reaction 5-phospho-beta-D-ribosylamine + glycine + ATP = N(1)-(5-phospho-beta-D-ribosyl)glycinamide + ADP + phosphate + H(+). It participates in purine metabolism; IMP biosynthesis via de novo pathway; N(1)-(5-phospho-D-ribosyl)glycinamide from 5-phospho-alpha-D-ribose 1-diphosphate: step 2/2. In Listeria monocytogenes serotype 4b (strain F2365), this protein is Phosphoribosylamine--glycine ligase.